A 431-amino-acid chain; its full sequence is Enolase (431 aa).

Gln167 is a binding site for (2R)-2-phosphoglycerate. The active-site Proton donor is Glu209. Mg(2+) contacts are provided by Asp246, Glu290, and Asp317. Residues Lys342, Arg371, Ser372, and Lys393 each coordinate (2R)-2-phosphoglycerate. Lys342 acts as the Proton acceptor in catalysis.

This sequence belongs to the enolase family. Component of the RNA degradosome, a multiprotein complex involved in RNA processing and mRNA degradation. Mg(2+) is required as a cofactor.

It localises to the cytoplasm. The protein resides in the secreted. The protein localises to the cell surface. It carries out the reaction (2R)-2-phosphoglycerate = phosphoenolpyruvate + H2O. The protein operates within carbohydrate degradation; glycolysis; pyruvate from D-glyceraldehyde 3-phosphate: step 4/5. In terms of biological role, catalyzes the reversible conversion of 2-phosphoglycerate (2-PG) into phosphoenolpyruvate (PEP). It is essential for the degradation of carbohydrates via glycolysis. The chain is Enolase from Pectobacterium atrosepticum (strain SCRI 1043 / ATCC BAA-672) (Erwinia carotovora subsp. atroseptica).